A 410-amino-acid polypeptide reads, in one-letter code: Histone-lysine N-methyltransferase SUV39H2 (410 aa).

The region spanning 47-105 is the Chromo domain; that stretch reads YEVEYLCDYKVVKDMEYYLVKWKGWPDSTNTWEPLQNLKCPLLLQQFSNDKHNYLSQVK. The 59-residue stretch at 189 to 247 folds into the Pre-SET domain; it reads FGCSCTDCFFQKCCPAEAGVLLAYNKNQQIKIPPGTPIYECNSRCQCGPDCPNRIVQKG. Zn(2+) is bound by residues C191, C193, C196, C201, C202, C229, C233, C235, and C239. An SET domain is found at 250 to 373; sequence YSLCIFRTSN…AGEELTFDYQ (124 aa). Residues 261–263, Y304, and 330–331 contribute to the S-adenosyl-L-methionine site; these read RGW and NH. C333 contributes to the Zn(2+) binding site. S381, S384, and S388 each carry phosphoserine. The Post-SET domain occupies 394–410; sequence VRTVCKCGAVTCRGYLN. C398, C400, and C405 together coordinate Zn(2+).

Belongs to the class V-like SAM-binding methyltransferase superfamily. Histone-lysine methyltransferase family. Suvar3-9 subfamily. Interacts with SMAD5. The large PER complex involved in the histone methylation is composed of at least PER2, CBX3, TRIM28, SUV39H1 and/or SUV39H2; CBX3 mediates the formation of the complex. Post-translationally, ubiquitinated by the DCX(DCAF13) E3 ubiquitin ligase complex, leading to its degradation.

It localises to the nucleus. The protein resides in the chromosome. Its subcellular location is the centromere. It carries out the reaction L-lysyl(9)-[histone H3] + 3 S-adenosyl-L-methionine = N(6),N(6),N(6)-trimethyl-L-lysyl(9)-[histone H3] + 3 S-adenosyl-L-homocysteine + 3 H(+). Its function is as follows. Histone methyltransferase that specifically trimethylates 'Lys-9' of histone H3 using monomethylated H3 'Lys-9' as substrate. H3 'Lys-9' trimethylation represents a specific tag for epigenetic transcriptional repression by recruiting HP1 (CBX1, CBX3 and/or CBX5) proteins to methylated histones. Mainly functions in heterochromatin regions, thereby playing a central role in the establishment of constitutive heterochromatin at pericentric and telomere regions. H3 'Lys-9' trimethylation is also required to direct DNA methylation at pericentric repeats. SUV39H1 is targeted to histone H3 via its interaction with RB1 and is involved in many processes, such as cell cycle regulation, transcriptional repression and regulation of telomere length. May participate in regulation of higher-order chromatin organization during spermatogenesis. Recruited by the large PER complex to the E-box elements of the circadian target genes such as PER2 itself or PER1, contributes to the conversion of local chromatin to a heterochromatin-like repressive state through H3 'Lys-9' trimethylation. The chain is Histone-lysine N-methyltransferase SUV39H2 (SUV39H2) from Macaca fascicularis (Crab-eating macaque).